The primary structure comprises 643 residues: MAKPCLFSFSLCLLLLSSLCLAERPERYKECQLDRLNALEPDNRVESEGGVTETWNSNRPELRCAGVAFEKHTIQPQGLHLPSYTNYPQLIFIVEGEGALGISVPGCTETYEEAQQSQSSQDPRRRSSRSQSQEQEQQDSHQKIQYFREGDIIAIPPGIPYWTYNYGEQRLVAINLLDTTSLLNQLDPSPRRFYIAGNPEEEHPETQEQQGQQREQQQGAGGRRRGKHQQEQEEEGKNNVLSGFDPQFLTQAFNVDEEIINRLQNPDERLKQIVRVKRGLSIISPKSQEEEEEEEEEPRQRGQPERREERREEEKEEEEEEDEPRSRERYERQSRRRPGRQQGRQGEEQEEESESEQEGRGQQREWERTTRHRRAQGEEGEEEEEETSTRVRRQQGRGRGQEQGQEQGQEQEQEEEQQEGRRGRHGGRGRRSGQQREEEEEEQQQQQGRRKRQESRNGLEETICTARLLENIAKPSRADLYNPNAGRISSVNSLTLPILRWFQLSADYVNLYRNGIYAPHWNINANSVIFVTRGRGRVQVVNCQGNSVFNDDLRRGQLLVVPQNFVVAHQAGDEGFEFIAFKTNDLAATSPVKQVFRGIPAEVLANAFGLRLNQVSQLKYSGNQGPLVSPQSESEDHTLPKVA.

A signal peptide spans 1 to 22 (MAKPCLFSFSLCLLLLSSLCLA). Disulfide bonds link cysteine 31/cysteine 64 and cysteine 107/cysteine 464. One can recognise a Cupin type-1 1 domain in the interval 36-261 (LNALEPDNRV…AFNVDEEIIN (226 aa)). Disordered stretches follow at residues 110 to 142 (TYEE…DSHQ), 190 to 243 (PRRF…VLSG), and 285 to 458 (PKSQ…SRNG). Over residues 207 to 218 (QEQQGQQREQQQ) the composition is skewed to low complexity. 2 stretches are compositionally biased toward basic and acidic residues: residues 228–237 (HQQEQEEEGK) and 298–313 (PRQR…RREE). The segment covering 314-323 (EKEEEEEEDE) has biased composition (acidic residues). Composition is skewed to basic and acidic residues over residues 324 to 333 (PRSRERYERQ) and 357 to 369 (QEGR…WERT). Basic residues predominate over residues 422–433 (RGRHGGRGRRSG). A Cupin type-1 2 domain is found at 470–616 (ENIAKPSRAD…AFGLRLNQVS (147 aa)). Residues 623 to 632 (NQGPLVSPQS) are compositionally biased toward polar residues. The disordered stretch occupies residues 623-643 (NQGPLVSPQSESEDHTLPKVA). Residues 634-643 (SEDHTLPKVA) show a composition bias toward basic and acidic residues.

Belongs to the 11S seed storage protein (globulins) family. Hexamer; each subunit is composed of an acidic and a basic chain derived from a single precursor and linked by a disulfide bond. Component of globulins complexes which accumulate in seeds.

Functionally, sulfur-rich seed storage protein. This protein found in the seeds of many leguminous and non-leguminous plants is the source of sulfur-containing amino acids in seed meals. The sequence is that of Conglutin alpha 2 from Lupinus angustifolius (Narrow-leaved blue lupine).